We begin with the raw amino-acid sequence, 113 residues long: Retrotransposon Gag-like protein 8B (113 aa).

It belongs to the FAM127 family.

The chain is Retrotransposon Gag-like protein 8B (RTL8B) from Homo sapiens (Human).